Consider the following 475-residue polypeptide: Sulfate adenylyltransferase subunit 1 (475 aa).

The tr-type G domain occupies 25 to 239 (KSLLRFLTCG…EVLETVEIQR (215 aa)). Positions 34 to 41 (GSVDDGKS) are G1. Residue 34-41 (GSVDDGKS) coordinates GTP. The segment at 92–96 (GITID) is G2. Residues 113 to 116 (DTPG) are G3. Residues 113–117 (DTPGH) and 168–171 (NKMD) each bind GTP. A G4 region spans residues 168–171 (NKMD). A G5 region spans residues 206–208 (SAL).

It belongs to the TRAFAC class translation factor GTPase superfamily. Classic translation factor GTPase family. CysN/NodQ subfamily. Heterodimer composed of CysD, the smaller subunit, and CysN.

The enzyme catalyses sulfate + ATP + H(+) = adenosine 5'-phosphosulfate + diphosphate. Its pathway is sulfur metabolism; hydrogen sulfide biosynthesis; sulfite from sulfate: step 1/3. Its function is as follows. With CysD forms the ATP sulfurylase (ATPS) that catalyzes the adenylation of sulfate producing adenosine 5'-phosphosulfate (APS) and diphosphate, the first enzymatic step in sulfur assimilation pathway. APS synthesis involves the formation of a high-energy phosphoric-sulfuric acid anhydride bond driven by GTP hydrolysis by CysN coupled to ATP hydrolysis by CysD. This Escherichia coli (strain ATCC 8739 / DSM 1576 / NBRC 3972 / NCIMB 8545 / WDCM 00012 / Crooks) protein is Sulfate adenylyltransferase subunit 1.